The following is a 699-amino-acid chain: Protein Scribble homolog let-413 (699 aa).

LRR repeat units lie at residues Lys-37 to Arg-59, His-60 to Leu-81, Gln-83 to Cys-104, Leu-106 to Cys-127, Ser-129 to Leu-150, Asn-152 to Arg-174, Lys-175 to Leu-196, Ser-198 to Cys-219, Met-221 to Met-242, Asn-244 to Leu-265, Arg-267 to Cys-288, Ser-290 to Leu-311, Gln-313 to Cys-334, Ser-336 to Cys-357, Asn-359 to Leu-380, and Lys-382 to Arg-403. Positions Ala-584–Ser-665 constitute a PDZ domain. The segment at Arg-656–Ser-699 is disordered. Polar residues-rich tracts occupy residues Ser-659–Leu-676 and Pro-684–Ser-699.

It belongs to the LAP (LRR and PDZ) protein family. As to expression, expressed in the terminal web of the intestine. Expressed in seam cells. Expressed in the basolateral surfaces of epithelia and the nervous system. Expressed in the intestine, epidermis, excretory canal, reproductive system including vulva, uterus and spermatheca, in both larval and adult stage animals.

It is found in the basolateral cell membrane. In terms of biological role, critical role in assembling adherens junctions; adapter protein involved in polarizing protein trafficking in epithelial cells. Necessary to maintain, not establish, the entire terminal web (organelle-depleted, intermediate filament-rich layer of cytoplasm that underlies the apical microvilli of polarized epithelial cells) or brush border assembly at the apical surface gut cells. Required for correct localization of ifb-2 intermediate filaments in the terminal web. Required for dlg-1 and hmr-1 lateral localization. Maintains cell polarity by correctly positioning adherens junction protein components including ajm-1 and hmp-1 at discrete subapical positions. Plays a role in the correct localization of the dlg-1-ajm-1 complex, polarity protein par-3, and actin microfilament to the apical junction of spermatheca cells, and is required for ovulation. Regulates the establishment of newly-formed epithelia in conjunction with dlg-1. Required in the epidermis during larval development. Plays a role in cellular junction integrity and in the directed outgrowth of seam cells, towards neighboring seam cells, during larval development; probably acts by promoting the assembly and stability of dlg-1 at apical junctions. This Caenorhabditis elegans protein is Protein Scribble homolog let-413.